Here is a 323-residue protein sequence, read N- to C-terminus: Lipoyl synthase (323 aa).

The span at 1 to 14 (MVTILDRTKPDDKR) shows a compositional bias: basic and acidic residues. The tract at residues 1–25 (MVTILDRTKPDDKRIRHPEKAHKPD) is disordered. 7 residues coordinate [4Fe-4S] cluster: C61, C66, C72, C87, C91, C94, and S300. A Radical SAM core domain is found at 73 to 289 (WEKKHATFMI…EDIAYTKGFL (217 aa)).

The protein belongs to the radical SAM superfamily. Lipoyl synthase family. It depends on [4Fe-4S] cluster as a cofactor.

The protein resides in the cytoplasm. It carries out the reaction [[Fe-S] cluster scaffold protein carrying a second [4Fe-4S](2+) cluster] + N(6)-octanoyl-L-lysyl-[protein] + 2 oxidized [2Fe-2S]-[ferredoxin] + 2 S-adenosyl-L-methionine + 4 H(+) = [[Fe-S] cluster scaffold protein] + N(6)-[(R)-dihydrolipoyl]-L-lysyl-[protein] + 4 Fe(3+) + 2 hydrogen sulfide + 2 5'-deoxyadenosine + 2 L-methionine + 2 reduced [2Fe-2S]-[ferredoxin]. It participates in protein modification; protein lipoylation via endogenous pathway; protein N(6)-(lipoyl)lysine from octanoyl-[acyl-carrier-protein]: step 2/2. In terms of biological role, catalyzes the radical-mediated insertion of two sulfur atoms into the C-6 and C-8 positions of the octanoyl moiety bound to the lipoyl domains of lipoate-dependent enzymes, thereby converting the octanoylated domains into lipoylated derivatives. This chain is Lipoyl synthase, found in Allorhizobium ampelinum (strain ATCC BAA-846 / DSM 112012 / S4) (Agrobacterium vitis (strain S4)).